Consider the following 456-residue polypeptide: 3-isopropylmalate dehydratase large subunit (456 aa).

Residues cysteine 336, cysteine 396, and cysteine 399 each coordinate [4Fe-4S] cluster.

This sequence belongs to the aconitase/IPM isomerase family. LeuC type 1 subfamily. Heterodimer of LeuC and LeuD. Requires [4Fe-4S] cluster as cofactor.

The catalysed reaction is (2R,3S)-3-isopropylmalate = (2S)-2-isopropylmalate. The protein operates within amino-acid biosynthesis; L-leucine biosynthesis; L-leucine from 3-methyl-2-oxobutanoate: step 2/4. Functionally, catalyzes the isomerization between 2-isopropylmalate and 3-isopropylmalate, via the formation of 2-isopropylmaleate. In Staphylococcus saprophyticus subsp. saprophyticus (strain ATCC 15305 / DSM 20229 / NCIMB 8711 / NCTC 7292 / S-41), this protein is 3-isopropylmalate dehydratase large subunit.